The primary structure comprises 40 residues: Photosystem II reaction center protein J (40 aa).

The chain crosses the membrane as a helical span at residues leucine 10–tyrosine 30.

It belongs to the PsbJ family. As to quaternary structure, PSII is composed of 1 copy each of membrane proteins PsbA, PsbB, PsbC, PsbD, PsbE, PsbF, PsbH, PsbI, PsbJ, PsbK, PsbL, PsbM, PsbT, PsbX, PsbY, PsbZ, Psb30/Ycf12, at least 3 peripheral proteins of the oxygen-evolving complex and a large number of cofactors. It forms dimeric complexes.

It is found in the plastid. The protein resides in the chloroplast thylakoid membrane. Its function is as follows. One of the components of the core complex of photosystem II (PSII). PSII is a light-driven water:plastoquinone oxidoreductase that uses light energy to abstract electrons from H(2)O, generating O(2) and a proton gradient subsequently used for ATP formation. It consists of a core antenna complex that captures photons, and an electron transfer chain that converts photonic excitation into a charge separation. The chain is Photosystem II reaction center protein J from Adiantum capillus-veneris (Maidenhair fern).